Consider the following 295-residue polypeptide: Pyridoxal 5'-phosphate synthase subunit PdxS (295 aa).

Asp25 is a D-ribose 5-phosphate binding site. Lys82 functions as the Schiff-base intermediate with D-ribose 5-phosphate in the catalytic mechanism. Residue Gly154 participates in D-ribose 5-phosphate binding. Arg166 contributes to the D-glyceraldehyde 3-phosphate binding site. Residues Gly215 and 236–237 contribute to the D-ribose 5-phosphate site; that span reads GS.

It belongs to the PdxS/SNZ family. In the presence of PdxT, forms a dodecamer of heterodimers.

It catalyses the reaction aldehydo-D-ribose 5-phosphate + D-glyceraldehyde 3-phosphate + L-glutamine = pyridoxal 5'-phosphate + L-glutamate + phosphate + 3 H2O + H(+). It participates in cofactor biosynthesis; pyridoxal 5'-phosphate biosynthesis. Its function is as follows. Catalyzes the formation of pyridoxal 5'-phosphate from ribose 5-phosphate (RBP), glyceraldehyde 3-phosphate (G3P) and ammonia. The ammonia is provided by the PdxT subunit. Can also use ribulose 5-phosphate and dihydroxyacetone phosphate as substrates, resulting from enzyme-catalyzed isomerization of RBP and G3P, respectively. This chain is Pyridoxal 5'-phosphate synthase subunit PdxS, found in Actinobacillus pleuropneumoniae serotype 7 (strain AP76).